The sequence spans 627 residues: Protein fem-1 homolog B (627 aa).

ANK repeat units lie at residues 45 to 74 (QRST…VQTQ), 87 to 116 (DGAT…NVNH), 120 to 149 (TNST…NISI), and 153 to 182 (YDNT…DPNA). 3 residues coordinate Zn(2+): His-185, Cys-186, and His-218. ANK repeat units lie at residues 186–215 (CGAT…AIVV) and 218–248 (HGMT…DRRS). The TPR repeat unit spans residues 344-377 (SHPIIYRGAVYADNMEFEQCIKLWLHALHLRQKG). ANK repeat units lie at residues 483 to 527 (EGFT…EVNA) and 531 to 568 (EGNS…HTDM).

This sequence belongs to the fem-1 family. Component of a CRL2 E3 ubiquitin-protein ligase complex, also named ECS (Elongin BC-CUL2/5-SOCS-box protein) complex, composed of CUL2, Elongin BC (ELOB and ELOC), RBX1 and substrate-specific adapter FEM1B. Homooligomer. Interacts with PPM1F and PHTF1. Interacts with the death domain of FAS/TNFRSF6 and TNFRSF1A. Interacts with CHEK1. Interacts with NKX3-1. Widely expressed. Highly expressed in testis. Weakly expressed in other tissues.

The protein resides in the cytoplasm. Its subcellular location is the nucleus. It functions in the pathway protein modification; protein ubiquitination. Activity of the CRL2(FEM1B) complex toward FNIP1 is inhibited by BEX family proteins (BEX1, BEX2, BEX3, BEX4 and/or BEX5) in absence of reductive stress. Mechanistically, BEX proteins act as pseudosubstrate inhibitors that associate with FEM1B via zinc in absence of reductive stress, thereby preventing association between FEM1B and FNIP1. Its function is as follows. Substrate-recognition component of a Cul2-RING (CRL2) E3 ubiquitin-protein ligase complex of the DesCEND (destruction via C-end degrons) pathway, which recognizes a C-degron located at the extreme C terminus of target proteins, leading to their ubiquitination and degradation. The C-degron recognized by the DesCEND pathway is usually a motif of less than ten residues and can be present in full-length proteins, truncated proteins or proteolytically cleaved forms. The CRL2(FEM1B) complex specifically recognizes proteins ending with -Gly-Leu-Asp-Arg, such as CDK5R1, leading to their ubiquitination and degradation. Also acts as a regulator of the reductive stress response by mediating ubiquitination of reduced FNIP1: in response to reductive stress, the CRL2(FEM1B) complex specifically recognizes a conserved Cys degron in FNIP1 when this degron is reduced, leading to FNIP1 degradation and subsequent activation of mitochondria to recalibrate reactive oxygen species (ROS). Mechanistically, recognizes and binds reduced FNIP1 through two interface zinc ions, which act as a molecular glue that recruit reduced FNIP1 to FEM1B. Promotes ubiquitination of GLI1, suppressing GLI1 transcriptional activator activity. Promotes ubiquitination and degradation of ANKRD37. Promotes ubiquitination and degradation of SLBP. Involved in apoptosis by acting as a death receptor-associated protein that mediates apoptosis. Also involved in glucose homeostasis in pancreatic islet. May also act as an adapter/mediator in replication stress-induced signaling that leads to the activation of CHEK1. This chain is Protein fem-1 homolog B, found in Homo sapiens (Human).